The sequence spans 179 residues: Repressor of phase 1 flagellin gene (179 aa).

Functionally, transcriptional repressor of the FliC phase-1 flagellin. In Salmonella typhimurium (strain LT2 / SGSC1412 / ATCC 700720), this protein is Repressor of phase 1 flagellin gene (fljA).